Here is a 932-residue protein sequence, read N- to C-terminus: MLKTLLGDPNKRKLKKYQPDVVEINLLEPEMQALSDQELQSKTGEFKRQLEQGKSLDELLPEAFAVVREASRRVLGLRHFDVQLLGGMILHDGQIAEMKTGEGKTLVSTLPAYLNALTGKGVQIITVNDYLARRDAEWMGQVHRFLGLSVGLIQQSMPPQERQKNYACDITYATNSEIGFDYLRDNMATSMAEVVLRPFHYCVIDEVDSVLIDEARTPLIISGQVERPTEKYLRATAIADALQKEEHYEVDEKARNILLTDEGFIEAEKLLGVKDLFDSQDPWAHYIFNAVKAKELFIKDVNYIIRGGEIVIVDEFTGRVMPGRRWSDGLHQAIEAKEGLDIQNESQTLATITYQNLFLLYPKLAGMTGTAKTEEAEFEKIYKLEVTVVPTNRATGRRDLPDVVYKNEMAKWRAVAAECAEFHQAGRPVLVGTTSVEKSEVLSQLLNQAGIPHNLLNAKPENVERESEIVAQAGRKGAVTIATNMAGRGTDIILGGNADYMARLKVREYFMPRIVMPESDDPLAMMRIMMGDGNASGGQGFAPQGNRPQKTWKASPNIFPTKLSRETEQLLKAAVDFAVKQYGERSIPELQAEDIVAIASEKAPTEDPVVQRLREAYNQIRSEYETFTHQEHDEVVQFGGLHVIGTERHESRRVDNQLRGRAGRQGDPGSTRFFLSLEDNLLRIFGGDRVAGLMNAFRVEEDMPIESRILTGSLENAQRKVETYYYDIRKQVFEYDDVMNNQRRAIYAERRRVLEGEDLKERVLEYAERTMDDIVEAYVNPDLPPEEWDLNSMVGKVKEFVNLLADLEPQQLEDLSMAEMQMFLHEQVRIAYDRKEAEIDQLQPGLMRQAERFFILQQIDTLWREHLQAMDALRESVGLRGYGQQDPLVEYKSEGYELFLDMMTAIRRNVVYSLFQFQPQYQPPEEMPSEVV.

ATP-binding positions include Gln-83, 101-105 (GEGKT), and Asp-491.

Belongs to the SecA family. As to quaternary structure, monomer and homodimer. Part of the essential Sec protein translocation apparatus which comprises SecA, SecYEG and auxiliary proteins SecDF. Other proteins may also be involved.

The protein resides in the cell inner membrane. It localises to the cellular thylakoid membrane. The protein localises to the cytoplasm. It catalyses the reaction ATP + H2O + cellular proteinSide 1 = ADP + phosphate + cellular proteinSide 2.. Its function is as follows. Part of the Sec protein translocase complex. Interacts with the SecYEG preprotein conducting channel. Has a central role in coupling the hydrolysis of ATP to the transfer of proteins into and across the cell membrane, serving as an ATP-driven molecular motor driving the stepwise translocation of polypeptide chains across the membrane. In terms of biological role, probably participates in protein translocation into and across both the cytoplasmic and thylakoid membranes in cyanobacterial cells. In Cyanothece sp. (strain PCC 7425 / ATCC 29141), this protein is Protein translocase subunit SecA.